We begin with the raw amino-acid sequence, 587 residues long: Phosphomethylpyrimidine synthase (587 aa).

Residues Asn218, Met247, Tyr276, His312, Ser332–Gly334, Asp373–Arg376, and Glu412 contribute to the substrate site. Zn(2+) is bound at residue His416. A substrate-binding site is contributed by Tyr439. Residue His480 participates in Zn(2+) binding. Residues Cys560, Cys563, and Cys568 each contribute to the [4Fe-4S] cluster site.

Belongs to the ThiC family. [4Fe-4S] cluster serves as cofactor.

The catalysed reaction is 5-amino-1-(5-phospho-beta-D-ribosyl)imidazole + S-adenosyl-L-methionine = 4-amino-2-methyl-5-(phosphooxymethyl)pyrimidine + CO + 5'-deoxyadenosine + formate + L-methionine + 3 H(+). It functions in the pathway cofactor biosynthesis; thiamine diphosphate biosynthesis. Catalyzes the synthesis of the hydroxymethylpyrimidine phosphate (HMP-P) moiety of thiamine from aminoimidazole ribotide (AIR) in a radical S-adenosyl-L-methionine (SAM)-dependent reaction. The polypeptide is Phosphomethylpyrimidine synthase (Porphyromonas gingivalis (strain ATCC 33277 / DSM 20709 / CIP 103683 / JCM 12257 / NCTC 11834 / 2561)).